The sequence spans 120 residues: UPF0102 protein TW312 (120 aa).

It belongs to the UPF0102 family.

In Tropheryma whipplei (strain TW08/27) (Whipple's bacillus), this protein is UPF0102 protein TW312.